The sequence spans 1201 residues: DNA-directed RNA polymerase subunit beta' (1201 aa).

The Zn(2+) site is built by Cys60, Cys62, Cys75, and Cys78. Positions 449, 451, and 453 each coordinate Mg(2+). Positions 818, 892, 899, and 902 each coordinate Zn(2+).

The protein belongs to the RNA polymerase beta' chain family. The RNAP catalytic core consists of 2 alpha, 1 beta, 1 beta' and 1 omega subunit. When a sigma factor is associated with the core the holoenzyme is formed, which can initiate transcription. The cofactor is Mg(2+). Zn(2+) is required as a cofactor.

The enzyme catalyses RNA(n) + a ribonucleoside 5'-triphosphate = RNA(n+1) + diphosphate. Functionally, DNA-dependent RNA polymerase catalyzes the transcription of DNA into RNA using the four ribonucleoside triphosphates as substrates. The polypeptide is DNA-directed RNA polymerase subunit beta' (Listeria innocua serovar 6a (strain ATCC BAA-680 / CLIP 11262)).